Reading from the N-terminus, the 471-residue chain is Probable nucleoredoxin 3 (471 aa).

Thioredoxin domains follow at residues 15–173 (VSIP…ARRQ) and 179–334 (QLLG…KERD).

It belongs to the nucleoredoxin family.

It catalyses the reaction [protein]-dithiol + NAD(+) = [protein]-disulfide + NADH + H(+). The enzyme catalyses [protein]-dithiol + NADP(+) = [protein]-disulfide + NADPH + H(+). In terms of biological role, probable thiol-disulfide oxidoreductase that may participate in various redox reactions. This chain is Probable nucleoredoxin 3, found in Oryza sativa subsp. japonica (Rice).